A 46-amino-acid polypeptide reads, in one-letter code: Mu-segestritoxin-Sf1c (46 aa).

4 cysteine pairs are disulfide-bonded: Cys-3–Cys-19, Cys-10–Cys-22, Cys-18–Cys-42, and Cys-24–Cys-40. Residues Arg-31–Trp-33 form a keys region for toxin activity region.

It belongs to the neurotoxin 16 (SFI) family. In terms of tissue distribution, expressed by the venom gland.

The protein localises to the secreted. Functionally, insecticidal toxin. It inhibits insect voltage-gated sodium channels (Nav) by partially blocking the channel pore in DUM neurons from the American cockroach, not by acting as a gating modifier. The inhibition is only partially reversible after prolonged washout. In vivo, the toxin causes flaccid paralysis followed by death when injected into Heliothis virescens larvae. It also causes uncoordinated movements followed by full paralysis to sheep blowflies (Lucilia cuprina). When the toxin is fused to snowdrop lectin, it is orally active against larvae of the tomato moth (Laconobia oleracea), the rice brown planthopper (Nilaparvata lugens), and the peach-potato aphid (Myzus persicae). This is Mu-segestritoxin-Sf1c from Segestria florentina (Tube-web spider).